Here is a 60-residue protein sequence, read N- to C-terminus: Large ribosomal subunit protein bL33 (60 aa).

This sequence belongs to the bacterial ribosomal protein bL33 family.

The sequence is that of Large ribosomal subunit protein bL33 from Cytophaga hutchinsonii (strain ATCC 33406 / DSM 1761 / CIP 103989 / NBRC 15051 / NCIMB 9469 / D465).